The primary structure comprises 259 residues: Leucine-rich repeat-containing protein 61 (259 aa).

3 LRR repeats span residues 54 to 75 (NLEWLDLSGNALTHLGPLASLR), 76 to 97 (QLAVLNVSNNRLTGLEPLAACE), and 98 to 119 (NLQSLNAAGNLLTTPGQLQCLA). Residues 138–178 (NPLCANASYWAVVRELLPGLKVIDGERVSGRGSELYQLCRD) form the LRRCT domain.

This chain is Leucine-rich repeat-containing protein 61 (Lrrc61), found in Mus musculus (Mouse).